The following is a 365-amino-acid chain: Coxsackievirus and adenovirus receptor (365 aa).

Residues 1 to 19 form the signal peptide; that stretch reads MALLLCFVLLCGVVDFARS. Ig-like C2-type domains lie at 20–134 and 141–228; these read LSIT…KKIH and PSGA…LRLN. Residues 20 to 237 lie on the Extracellular side of the membrane; sequence LSITTPEEMI…NVVPPSNKAG (218 aa). 2 cysteine pairs are disulfide-bonded: Cys-41-Cys-120 and Cys-162-Cys-212. Residues Asn-106 and Asn-201 are each glycosylated (N-linked (GlcNAc...) asparagine). A helical transmembrane segment spans residues 238-258; the sequence is LIAGAIIGTLLALALIGLIIF. 2 S-palmitoyl cysteine lipidation sites follow: Cys-259 and Cys-260. Residues 259–365 lie on the Cytoplasmic side of the membrane; it reads CCRKKRREEK…PAQSKDGSIV (107 aa). Over residues 269 to 282 the composition is skewed to basic and acidic residues; that stretch reads YEKEVHHDIREDVP. A disordered region spans residues 269–343; sequence YEKEVHHDIR…TLPPAKVAAP (75 aa). Residues 286–322 are compositionally biased toward polar residues; it reads SRTSTARSYIGSNHSSLGSMSPSNMEGYSKTQYNQVP. Residues Ser-297, Ser-304, Ser-306, Ser-323, Ser-332, and Ser-363 each carry the phosphoserine modification. The PDZ-binding motif lies at 360 to 365; sequence KDGSIV.

In terms of assembly, monomer. May form homodimer. Interacts with LNX, MAGI1, DLG4, PRKCABP, TJP1 and CTNNB1. Interacts with MPDZ; recruits MPDZ to intercellular contact sites. Interacts with JAML (homodimeric form). Secreted isoform 3, isoform 4 and isoform 5 can interact with the extracellular domain of the receptor. (Microbial infection) Interacts with adenovirus subgroups A, C, D, E and F fiber proteins as well as coxsackievirus B1, B2, B3, B4, B5 and B6 capsid proteins. N-glycosylated. Post-translationally, palmitoylated on Cys-259 and/or Cys-260; required for proper localization to the plasma membrane. In terms of tissue distribution, expressed in pancreas, brain, heart, small intestine, testis, prostate and at a lower level in liver and lung. Isoform 5 is ubiquitously expressed. Isoform 3 is expressed in heart, lung and pancreas. In skeletal muscle, isoform 1 is found at the neuromuscular junction and isoform 2 is found in blood vessels. In cardiac muscle, isoform 1 and isoform 2 are found at intercalated disks. In heart expressed in subendothelial layers of the vessel wall but not in the luminal endothelial surface. Expression is elevated in hearts with dilated cardiomyopathy.

Its subcellular location is the cell membrane. It is found in the basolateral cell membrane. It localises to the cell junction. The protein resides in the tight junction. The protein localises to the adherens junction. Its subcellular location is the secreted. Its function is as follows. Component of the epithelial apical junction complex that may function as a homophilic cell adhesion molecule and is essential for tight junction integrity. Also involved in transepithelial migration of leukocytes through adhesive interactions with JAML a transmembrane protein of the plasma membrane of leukocytes. The interaction between both receptors also mediates the activation of gamma-delta T-cells, a subpopulation of T-cells residing in epithelia and involved in tissue homeostasis and repair. Upon epithelial CXADR-binding, JAML induces downstream cell signaling events in gamma-delta T-cells through PI3-kinase and MAP kinases. It results in proliferation and production of cytokines and growth factors by T-cells that in turn stimulate epithelial tissues repair. Functionally, (Microbial infection) Acts as a receptor for adenovirus type C. (Microbial infection) Acts as a receptor for Coxsackievirus B1 to B6. This Homo sapiens (Human) protein is Coxsackievirus and adenovirus receptor (CXADR).